A 243-amino-acid polypeptide reads, in one-letter code: Ribonuclease HII (243 aa).

The RNase H type-2 domain occupies 23–217; it reads SVIVGVDEVG…LSSECEGAPP (195 aa). 3 residues coordinate a divalent metal cation: aspartate 29, glutamate 30, and aspartate 122. Residues 223-243 form a disordered region; sequence LSSTGIKTPVDGRGDAVATRD. Residues 232-243 show a composition bias toward basic and acidic residues; the sequence is VDGRGDAVATRD.

The protein belongs to the RNase HII family. It depends on Mn(2+) as a cofactor. Requires Mg(2+) as cofactor.

The protein resides in the cytoplasm. It carries out the reaction Endonucleolytic cleavage to 5'-phosphomonoester.. Functionally, endonuclease that specifically degrades the RNA of RNA-DNA hybrids. The protein is Ribonuclease HII of Anaplasma marginale (strain St. Maries).